A 166-amino-acid chain; its full sequence is Small ribosomal subunit protein uS4 (166 aa).

In terms of domain architecture, S4 RNA-binding spans 102-164 (RRLQTIVWRK…HPSCLEVEKE (63 aa)).

This sequence belongs to the universal ribosomal protein uS4 family. Part of the 30S ribosomal subunit. Contacts protein S5. The interaction surface between S4 and S5 is involved in control of translational fidelity.

In terms of biological role, one of the primary rRNA binding proteins, it binds directly to 16S rRNA where it nucleates assembly of the body of the 30S subunit. Functionally, with S5 and S12 plays an important role in translational accuracy. The sequence is that of Small ribosomal subunit protein uS4 from Korarchaeum cryptofilum (strain OPF8).